The chain runs to 69 residues: Large ribosomal subunit protein bL31 (69 aa).

C16, C18, C36, and C39 together coordinate Zn(2+).

Belongs to the bacterial ribosomal protein bL31 family. Type A subfamily. In terms of assembly, part of the 50S ribosomal subunit. Zn(2+) is required as a cofactor.

Binds the 23S rRNA. The protein is Large ribosomal subunit protein bL31 of Kosmotoga olearia (strain ATCC BAA-1733 / DSM 21960 / TBF 19.5.1).